An 87-amino-acid chain; its full sequence is UPF0250 protein YPK_3025 (87 aa).

It belongs to the UPF0250 family.

In Yersinia pseudotuberculosis serotype O:3 (strain YPIII), this protein is UPF0250 protein YPK_3025.